The following is a 211-amino-acid chain: Large ribosomal subunit protein bL9 (211 aa).

Residues 183–211 (AAASEDEELAETAGVAPAEPSEEDDSAKA) are disordered. A compositionally biased stretch (acidic residues) spans 202–211 (PSEEDDSAKA).

It belongs to the bacterial ribosomal protein bL9 family.

Its function is as follows. Binds to the 23S rRNA. The sequence is that of Large ribosomal subunit protein bL9 from Roseobacter denitrificans (strain ATCC 33942 / OCh 114) (Erythrobacter sp. (strain OCh 114)).